Reading from the N-terminus, the 485-residue chain is Ribulose bisphosphate carboxylase large chain 2 (485 aa).

Residues N124 and T174 each contribute to the substrate site. K176 acts as the Proton acceptor in catalysis. K178 contributes to the substrate binding site. 3 residues coordinate Mg(2+): K202, D204, and E205. K202 bears the N6-carboxylysine mark. H294 serves as the catalytic Proton acceptor. Residues R295, H327, and S379 each contribute to the substrate site.

The protein belongs to the RuBisCO large chain family. Type I subfamily. In terms of assembly, heterohexadecamer of 8 large chains and 8 small chains. Mg(2+) is required as a cofactor.

It catalyses the reaction 2 (2R)-3-phosphoglycerate + 2 H(+) = D-ribulose 1,5-bisphosphate + CO2 + H2O. The enzyme catalyses D-ribulose 1,5-bisphosphate + O2 = 2-phosphoglycolate + (2R)-3-phosphoglycerate + 2 H(+). In terms of biological role, ruBisCO catalyzes two reactions: the carboxylation of D-ribulose 1,5-bisphosphate, the primary event in carbon dioxide fixation, as well as the oxidative fragmentation of the pentose substrate. Both reactions occur simultaneously and in competition at the same active site. The protein is Ribulose bisphosphate carboxylase large chain 2 of Rhodopseudomonas palustris (strain BisB5).